A 414-amino-acid polypeptide reads, in one-letter code: Esterase FrsA (414 aa).

It belongs to the FrsA family.

The enzyme catalyses a carboxylic ester + H2O = an alcohol + a carboxylate + H(+). In terms of biological role, catalyzes the hydrolysis of esters. This is Esterase FrsA from Escherichia coli O139:H28 (strain E24377A / ETEC).